The chain runs to 360 residues: Peptide chain release factor 1 (360 aa).

N5-methylglutamine is present on Gln237.

It belongs to the prokaryotic/mitochondrial release factor family. Post-translationally, methylated by PrmC. Methylation increases the termination efficiency of RF1.

The protein localises to the cytoplasm. Peptide chain release factor 1 directs the termination of translation in response to the peptide chain termination codons UAG and UAA. The polypeptide is Peptide chain release factor 1 (prfA) (Pseudomonas aeruginosa (strain ATCC 15692 / DSM 22644 / CIP 104116 / JCM 14847 / LMG 12228 / 1C / PRS 101 / PAO1)).